The chain runs to 437 residues: Aminopeptidase W (437 aa).

Residues C70, H361, and N382 contribute to the active site.

Belongs to the peptidase C1 family.

Its subcellular location is the cytoplasm. The protein is Aminopeptidase W (pepW) of Lactobacillus delbrueckii subsp. lactis.